The chain runs to 369 residues: Methionine import ATP-binding protein MetN (369 aa).

In terms of domain architecture, ABC transporter spans V31 to L266. G63–S70 contacts ATP.

Belongs to the ABC transporter superfamily. Methionine importer (TC 3.A.1.24) family. In terms of assembly, the complex is composed of two ATP-binding proteins (MetN), two transmembrane proteins (MetI) and a solute-binding protein (MetQ).

The protein resides in the cell inner membrane. It catalyses the reaction L-methionine(out) + ATP + H2O = L-methionine(in) + ADP + phosphate + H(+). The catalysed reaction is D-methionine(out) + ATP + H2O = D-methionine(in) + ADP + phosphate + H(+). Part of the ABC transporter complex MetNIQ involved in methionine import. Responsible for energy coupling to the transport system. The chain is Methionine import ATP-binding protein MetN from Brucella abortus (strain 2308).